The sequence spans 346 residues: GTPase Obg (346 aa).

In terms of domain architecture, Obg spans 1 to 158 (MKFLDQVKIY…RAIWLRLKLI (158 aa)). Positions 159-327 (ADVGLVGLPN…LLREAFALVR (169 aa)) constitute an OBG-type G domain. GTP-binding positions include 165-172 (GLPNAGKS), 190-194 (FTTLA), 212-215 (DIPG), 279-282 (NKID), and 308-310 (SGF). Mg(2+) contacts are provided by S172 and T192.

Belongs to the TRAFAC class OBG-HflX-like GTPase superfamily. OBG GTPase family. Monomer. It depends on Mg(2+) as a cofactor.

Its subcellular location is the cytoplasm. Its function is as follows. An essential GTPase which binds GTP, GDP and possibly (p)ppGpp with moderate affinity, with high nucleotide exchange rates and a fairly low GTP hydrolysis rate. Plays a role in control of the cell cycle, stress response, ribosome biogenesis and in those bacteria that undergo differentiation, in morphogenesis control. The sequence is that of GTPase Obg from Phenylobacterium zucineum (strain HLK1).